A 1400-amino-acid chain; its full sequence is DNA-directed RNA polymerase subunit beta' (1400 aa).

Positions 71, 73, 86, and 89 each coordinate Zn(2+). Residues Asp-462, Asp-464, and Asp-466 each contribute to the Mg(2+) site. Residues Cys-811, Cys-885, Cys-892, and Cys-895 each coordinate Zn(2+).

This sequence belongs to the RNA polymerase beta' chain family. As to quaternary structure, the RNAP catalytic core consists of 2 alpha, 1 beta, 1 beta' and 1 omega subunit. When a sigma factor is associated with the core the holoenzyme is formed, which can initiate transcription. Mg(2+) serves as cofactor. Requires Zn(2+) as cofactor.

It catalyses the reaction RNA(n) + a ribonucleoside 5'-triphosphate = RNA(n+1) + diphosphate. Its function is as follows. DNA-dependent RNA polymerase catalyzes the transcription of DNA into RNA using the four ribonucleoside triphosphates as substrates. This chain is DNA-directed RNA polymerase subunit beta', found in Brucella suis biovar 1 (strain 1330).